The primary structure comprises 76 residues: ATP synthase subunit c (76 aa).

Helical transmembrane passes span 13–33 and 55–75; these read LSVI…GILF and FIGL…ALII.

It belongs to the ATPase C chain family. In terms of assembly, F-type ATPases have 2 components, F(1) - the catalytic core - and F(0) - the membrane proton channel. F(1) has five subunits: alpha(3), beta(3), gamma(1), delta(1), epsilon(1). F(0) has three main subunits: a(1), b(2) and c(10-14). The alpha and beta chains form an alternating ring which encloses part of the gamma chain. F(1) is attached to F(0) by a central stalk formed by the gamma and epsilon chains, while a peripheral stalk is formed by the delta and b chains.

The protein localises to the cell membrane. In terms of biological role, f(1)F(0) ATP synthase produces ATP from ADP in the presence of a proton or sodium gradient. F-type ATPases consist of two structural domains, F(1) containing the extramembraneous catalytic core and F(0) containing the membrane proton channel, linked together by a central stalk and a peripheral stalk. During catalysis, ATP synthesis in the catalytic domain of F(1) is coupled via a rotary mechanism of the central stalk subunits to proton translocation. Its function is as follows. Key component of the F(0) channel; it plays a direct role in translocation across the membrane. A homomeric c-ring of between 10-14 subunits forms the central stalk rotor element with the F(1) delta and epsilon subunits. The sequence is that of ATP synthase subunit c from Bifidobacterium longum subsp. infantis (strain ATCC 15697 / DSM 20088 / JCM 1222 / NCTC 11817 / S12).